The sequence spans 160 residues: Transcription elongation factor GreA (160 aa).

The stretch at 12 to 76 (EGVKKLEEEL…QLENMLKNAS (65 aa)) forms a coiled coil.

Belongs to the GreA/GreB family.

Necessary for efficient RNA polymerase transcription elongation past template-encoded arresting sites. The arresting sites in DNA have the property of trapping a certain fraction of elongating RNA polymerases that pass through, resulting in locked ternary complexes. Cleavage of the nascent transcript by cleavage factors such as GreA or GreB allows the resumption of elongation from the new 3'terminus. GreA releases sequences of 2 to 3 nucleotides. This Clostridium botulinum (strain Kyoto / Type A2) protein is Transcription elongation factor GreA.